The primary structure comprises 137 residues: Secreted RxLR effector protein 67 (137 aa).

An N-terminal signal peptide occupies residues 1–18 (MRLYILVLAAIAVTLVFA). A RxLR-dEER motif is present at residues 32–61 (RALRQASITDEKSDDSLNAQAPPLSKSEKR). The segment at 40-65 (TDEKSDDSLNAQAPPLSKSEKRLSRS) is disordered. A helical membrane pass occupies residues 114-134 (WFVRMILEAGIFWAVFHCLSA).

The protein belongs to the RxLR effector family.

The protein resides in the secreted. It is found in the host cytoplasm. It localises to the host nucleus. Its subcellular location is the membrane. Functionally, effector that partially suppresses the tobacco programmed cell death induced by cell death-inducing proteins. The sequence is that of Secreted RxLR effector protein 67 from Plasmopara viticola (Downy mildew of grapevine).